The chain runs to 241 residues: ATP synthase subunit a (241 aa).

5 helical membrane passes run Gly30 to Gly50, Phe91 to Trp111, Ile128 to Ser148, Leu193 to Leu213, and Gly214 to Gly234.

The protein belongs to the ATPase A chain family. As to quaternary structure, F-type ATPases have 2 components, CF(1) - the catalytic core - and CF(0) - the membrane proton channel. CF(1) has five subunits: alpha(3), beta(3), gamma(1), delta(1), epsilon(1). CF(0) has four main subunits: a, b, b' and c.

It is found in the cellular thylakoid membrane. Its function is as follows. Key component of the proton channel; it plays a direct role in the translocation of protons across the membrane. The chain is ATP synthase subunit a from Prochlorococcus marinus (strain MIT 9515).